The following is an 802-amino-acid chain: Mitochondrial inner membrane m-AAA protease component AFG3L2 (802 aa).

A mitochondrion-targeting transit peptide spans 1-38; it reads MAHRCLLLWSRGGCRRGLPPLLVPRGCLGPDRRPCLRT. A propeptide spans 39-66 (removed in mature form); the sequence is LYQYATVQTASSRRSLLRDVIAAYQRFC. Positions 76–124 are disordered; that stretch reads YFPNGKNGKKASEPKEAVGEKKEPQPSGPQPSGGAGGGGGKRRGKKEDS. Positions 85–99 are enriched in basic and acidic residues; sequence KASEPKEAVGEKKEP. Position 116 is an N6-succinyllysine (lysine 116). 2 helical membrane-spanning segments follow: residues 142–162 and 250–270; these read FRMY…YFVF and GSFL…LYTI. ATP is bound by residues valine 309, alanine 310, threonine 351, glycine 352, lysine 353, threonine 354, leucine 355, and histidine 489. A Zn(2+)-binding site is contributed by histidine 573. Glutamate 574 is a catalytic residue. Positions 577 and 648 each coordinate Zn(2+). The disordered stretch occupies residues 759–802; that stretch reads VEGTGSLDEDTSLPEGLQDWNKEREKEEKKEKEKEEPLNEKVVS. The segment covering 778-802 has biased composition (basic and acidic residues); the sequence is WNKEREKEEKKEKEKEEPLNEKVVS.

This sequence in the N-terminal section; belongs to the AAA ATPase family. It in the C-terminal section; belongs to the peptidase M41 family. In terms of assembly, homohexamer. Forms heterohexamers with SPG7 and AFG3L1. The m-AAA protease is either composed of homohexamers of AFG3L2 or heterohexamers of AFG3L1, AFG3L2 and/or SPG7. Interacts with MAIP1. Interacts with DNAJC19. Interacts with PHB2. It depends on Zn(2+) as a cofactor. Upon import into the mitochondrion, the N-terminal transit peptide is cleaved to generate an intermediate form which undergoes autocatalytic proteolytic processing to generate the proteolytically active mature form. As to expression, highly expressed in the cerebellar Purkinje cells.

The protein resides in the mitochondrion inner membrane. The enzyme catalyses ATP + H2O = ADP + phosphate + H(+). Its function is as follows. Catalytic component of the m-AAA protease, a protease that plays a key role in proteostasis of inner mitochondrial membrane proteins, and which is essential for axonal and neuron development. AFG3L2 possesses both ATPase and protease activities: the ATPase activity is required to unfold substrates, threading them into the internal proteolytic cavity for hydrolysis into small peptide fragments. The m-AAA protease carries out protein quality control in the inner membrane of the mitochondria by mediating degradation of mistranslated or misfolded polypeptides. The m-AAA protease complex also promotes the processing and maturation of mitochondrial proteins, such as MRPL32/bL32m, PINK1 and SP7. Mediates protein maturation of the mitochondrial ribosomal subunit MRPL32/bL32m by catalyzing the cleavage of the presequence of MRPL32/bL32m prior to assembly into the mitochondrial ribosome. Required for SPG7 maturation into its active mature form after SPG7 cleavage by mitochondrial-processing peptidase (MPP). Required for the maturation of PINK1 into its 52kDa mature form after its cleavage by mitochondrial-processing peptidase (MPP). Acts as a regulator of calcium in neurons by mediating degradation of SMDT1/EMRE before its assembly with the uniporter complex, limiting the availability of SMDT1/EMRE for MCU assembly and promoting efficient assembly of gatekeeper subunits with MCU. Promotes the proteolytic degradation of GHITM upon hyperpolarization of mitochondria: progressive GHITM degradation leads to respiratory complex I degradation and broad reshaping of the mitochondrial proteome by AFG3L2. Also acts as a regulator of mitochondrial glutathione homeostasis by mediating cleavage and degradation of SLC25A39. SLC25A39 cleavage is prevented when SLC25A39 binds iron-sulfur. Involved in the regulation of OMA1-dependent processing of OPA1. May act by mediating processing of OMA1 precursor, participating in OMA1 maturation. In Mus musculus (Mouse), this protein is Mitochondrial inner membrane m-AAA protease component AFG3L2.